The chain runs to 416 residues: Homogentisate 1,2-dioxygenase (416 aa).

The Proton acceptor role is filled by His275. The Fe cation site is built by His318 and Glu324. Residues Tyr333 and His354 each coordinate homogentisate. Fe cation is bound at residue His354.

It belongs to the homogentisate dioxygenase family. In terms of assembly, hexamer; dimer of trimers. Fe cation is required as a cofactor.

It catalyses the reaction homogentisate + O2 = 4-maleylacetoacetate + H(+). The protein operates within amino-acid degradation; L-phenylalanine degradation; acetoacetate and fumarate from L-phenylalanine: step 4/6. Its function is as follows. Involved in the catabolism of homogentisate (2,5-dihydroxyphenylacetate or 2,5-OH-PhAc), a central intermediate in the degradation of phenylalanine and tyrosine. Catalyzes the oxidative ring cleavage of the aromatic ring of homogentisate to yield maleylacetoacetate. In Legionella pneumophila (strain Lens), this protein is Homogentisate 1,2-dioxygenase.